We begin with the raw amino-acid sequence, 191 residues long: Potassium-transporting ATPase KdpC subunit (191 aa).

The chain crosses the membrane as a helical span at residues 6 to 26; that stretch reads PALVLFILLTLLTGGVYPLLT.

It belongs to the KdpC family. In terms of assembly, the system is composed of three essential subunits: KdpA, KdpB and KdpC.

It localises to the cell inner membrane. Its function is as follows. Part of the high-affinity ATP-driven potassium transport (or Kdp) system, which catalyzes the hydrolysis of ATP coupled with the electrogenic transport of potassium into the cytoplasm. This subunit acts as a catalytic chaperone that increases the ATP-binding affinity of the ATP-hydrolyzing subunit KdpB by the formation of a transient KdpB/KdpC/ATP ternary complex. This Klebsiella pneumoniae subsp. pneumoniae (strain ATCC 700721 / MGH 78578) protein is Potassium-transporting ATPase KdpC subunit.